The chain runs to 301 residues: Oxygen-dependent coproporphyrinogen-III oxidase (301 aa).

Substrate is bound at residue S94. Residues H98 and H108 each coordinate a divalent metal cation. The Proton donor role is filled by H108. N110–R112 contributes to the substrate binding site. Residues H147 and H177 each coordinate a divalent metal cation. The important for dimerization stretch occupies residues Y242 to E277. Residue G260–R262 participates in substrate binding.

The protein belongs to the aerobic coproporphyrinogen-III oxidase family. As to quaternary structure, homodimer. It depends on a divalent metal cation as a cofactor.

It is found in the cytoplasm. The catalysed reaction is coproporphyrinogen III + O2 + 2 H(+) = protoporphyrinogen IX + 2 CO2 + 2 H2O. The protein operates within porphyrin-containing compound metabolism; protoporphyrin-IX biosynthesis; protoporphyrinogen-IX from coproporphyrinogen-III (O2 route): step 1/1. Involved in the heme biosynthesis. Catalyzes the aerobic oxidative decarboxylation of propionate groups of rings A and B of coproporphyrinogen-III to yield the vinyl groups in protoporphyrinogen-IX. This is Oxygen-dependent coproporphyrinogen-III oxidase from Photobacterium profundum (strain SS9).